Reading from the N-terminus, the 485-residue chain is E3 ubiquitin-protein ligase RNF14 (485 aa).

An RWD domain is found at 11 to 137; the sequence is DELLALASIY…QFLKEETLTY (127 aa). The D-box motif lies at 37–45; sequence RIYLDLPQN. Residues 217 to 458 are TRIAD supradomain; it reads KLFLCSICFC…DSESPCFNRL (242 aa). Residues Cys221, Cys224, Cys239, His241, Cys244, Cys247, Cys266, Cys271, Cys310, Cys315, Cys330, Cys333, Cys338, Cys341, and His346 each contribute to the Zn(2+) site. Residues 221–271 form an RING-type 1 zinc finger; the sequence is CSICFCEKLGSDCMYFLECKHVYCKACLKDYFEIQIKDGQVKCLNCPEPQC. The IBR-type zinc finger occupies 290–351; sequence ARYDRLLLQS…RLTYHGLSPC (62 aa). At Ser349 the chain carries Phosphoserine. Residues Cys351, Cys405, and Cys408 each contribute to the Zn(2+) site. An RING-type 2; atypical zinc finger spans residues 405–434; the sequence is CPCCGTPIQKLDGCNKMTCTGCMQYFCWIC. Cys418 is a catalytic residue. Zn(2+)-binding residues include Cys423, Cys426, Cys431, Cys434, His446, and Cys454.

It belongs to the RBR family. RNF14 subfamily. As to quaternary structure, interacts with GCN1; interaction takes place in response to ribosome collisions and is required for ubiquitination of EEF1A1/eEF1A. Interacts with the ubiquitin-conjugating enzymes UBE2E1 and UBE2E2. Interacts with AR/androgen receptor. Interacts with TCF7/TCF1, TCF7L1/TCF3 and TCF7L2/TCF4; promoting Wnt signaling. Post-translationally, RING-type zinc finger-dependent and UBE2E2-dependent autoubiquitination.

It is found in the cytoplasm. It localises to the nucleus. It catalyses the reaction [E2 ubiquitin-conjugating enzyme]-S-ubiquitinyl-L-cysteine + [acceptor protein]-L-lysine = [E2 ubiquitin-conjugating enzyme]-L-cysteine + [acceptor protein]-N(6)-ubiquitinyl-L-lysine.. Its pathway is protein modification; protein ubiquitination. Functionally, E3 ubiquitin-protein ligase that plays a key role in the RNF14-RNF25 translation quality control pathway, a pathway that takes place when a ribosome has stalled during translation, and which promotes ubiquitination and degradation of translation factors on stalled ribosomes. Recruited to stalled ribosomes by the ribosome collision sensor GCN1 and mediates 'Lys-6'-linked ubiquitination of target proteins, leading to their degradation. Mediates ubiquitination of EEF1A1/eEF1A and ETF1/eRF1 translation factors on stalled ribosomes, leading to their degradation. Also catalyzes ubiquitination of ribosomal proteins RPL0, RPL1, RPL12, RPS13 and RPS17. Specifically required to resolve RNA-protein cross-links caused by reactive aldehydes, which trigger translation stress by stalling ribosomes: acts by catalying 'Lys-6'-linked ubiquitination of RNA-protein cross-links, leading to their removal by the ATP-dependent unfoldase VCP and subsequent degradation by the proteasome. Independently of its function in the response to stalled ribosomes, acts as a regulator of transcription in Wnt signaling via its interaction with TCF transcription factors (TCF7/TCF1, TCF7L1/TCF3 and TCF7L2/TCF4). May also play a role as a coactivator for androgen- and, to a lesser extent, progesterone-dependent transcription. This is E3 ubiquitin-protein ligase RNF14 from Mus musculus (Mouse).